A 187-amino-acid polypeptide reads, in one-letter code: Inner membrane-spanning protein YciB (187 aa).

Helical transmembrane passes span 22–42 (IYVA…VTYA), 50–70 (MQLI…FFHD), 80–100 (IIYV…KSVV), 118–138 (INWA…YIAY), and 148–168 (FKVF…GVYI).

The protein belongs to the YciB family.

It is found in the cell inner membrane. In terms of biological role, plays a role in cell envelope biogenesis, maintenance of cell envelope integrity and membrane homeostasis. The sequence is that of Inner membrane-spanning protein YciB from Vibrio parahaemolyticus serotype O3:K6 (strain RIMD 2210633).